A 1534-amino-acid chain; its full sequence is DNA-directed RNA polymerase subunit beta'' (1534 aa).

Zn(2+) is bound by residues cysteine 220, cysteine 296, cysteine 303, and cysteine 306. Composition is skewed to basic and acidic residues over residues 644-668 (RTQE…RTRE) and 678-688 (PENKYRTREGE). Disordered stretches follow at residues 644 to 698 (RTQE…EDEY) and 719 to 800 (YRTL…KKEG). 2 stretches are compositionally biased toward acidic residues: residues 744–762 (GEYE…SSED) and 770–789 (TLEE…EYGS).

The protein belongs to the RNA polymerase beta' chain family. RpoC2 subfamily. In plastids the minimal PEP RNA polymerase catalytic core is composed of four subunits: alpha, beta, beta', and beta''. When a (nuclear-encoded) sigma factor is associated with the core the holoenzyme is formed, which can initiate transcription. Zn(2+) is required as a cofactor.

It is found in the plastid. Its subcellular location is the chloroplast. The catalysed reaction is RNA(n) + a ribonucleoside 5'-triphosphate = RNA(n+1) + diphosphate. In terms of biological role, DNA-dependent RNA polymerase catalyzes the transcription of DNA into RNA using the four ribonucleoside triphosphates as substrates. In Saccharum officinarum (Sugarcane), this protein is DNA-directed RNA polymerase subunit beta''.